The primary structure comprises 234 residues: Leucyl/phenylalanyl-tRNA--protein transferase (234 aa).

Belongs to the L/F-transferase family.

The protein resides in the cytoplasm. The catalysed reaction is N-terminal L-lysyl-[protein] + L-leucyl-tRNA(Leu) = N-terminal L-leucyl-L-lysyl-[protein] + tRNA(Leu) + H(+). It carries out the reaction N-terminal L-arginyl-[protein] + L-leucyl-tRNA(Leu) = N-terminal L-leucyl-L-arginyl-[protein] + tRNA(Leu) + H(+). It catalyses the reaction L-phenylalanyl-tRNA(Phe) + an N-terminal L-alpha-aminoacyl-[protein] = an N-terminal L-phenylalanyl-L-alpha-aminoacyl-[protein] + tRNA(Phe). In terms of biological role, functions in the N-end rule pathway of protein degradation where it conjugates Leu, Phe and, less efficiently, Met from aminoacyl-tRNAs to the N-termini of proteins containing an N-terminal arginine or lysine. In Klebsiella pneumoniae (strain 342), this protein is Leucyl/phenylalanyl-tRNA--protein transferase.